A 1565-amino-acid polypeptide reads, in one-letter code: Major cell-surface adhesin PAc (1565 aa).

A signal peptide spans 1-38; sequence MKVKKTYGFRKSKISKTLCGAVLGTVAAVSVAGQKVFA. Over residues 42–54 the composition is skewed to low complexity; that stretch reads TTTSDVDTKVVGT. Residues 42 to 81 form a disordered region; it reads TTTSDVDTKVVGTQTGNPATNLPEAQGSASKEAEQSQTKL. Over residues 72–81 the composition is skewed to basic and acidic residues; sequence KEAEQSQTKL. Ag I/II A repeat units follow at residues 146-220, 221-302, 303-384, and 385-466; these read KKTT…QKTN, AANQ…QEAN, AANE…KKAN, and AANE…QKDL. The segment at 203–448 is heptad repeats of Y-[EQ]-X-X-L-A-X; it reads EAKLAQYQAD…KRNADAKADY (246 aa). The V-region (lectin-like) stretch occupies residues 461–834; sequence KYQKDLADYP…VNVPKVTKEK (374 aa). Disordered stretches follow at residues 827 to 985 and 1486 to 1511; these read VPKV…PTPP and NTVKTTTPEDPADPTDPQDPSSPRTS. A P1 repeat occupies 848–887; that stretch reads TYETEKPLKPAPVAPNYEKEPTPPTRTPDQAEPNKPTPPT. Residues 888–926 form a P2 repeat; that stretch reads YETEKPLEPAPVEPSYEAEPTPPTRTPDQAEPNKPTPPT. A P3 repeat occupies 927-964; sequence YETEKPLEPAPVEPSYEAEPTPPTPTPDQPEPNKPVEP. The segment covering 946–961 has biased composition (pro residues); that stretch reads PTPPTPTPDQPEPNKP. The LPXTG sorting signal signature appears at 1532–1536; it reads LPNTG. Residue Thr1535 is modified to Pentaglycyl murein peptidoglycan amidated threonine. The propeptide at 1536–1565 is removed by sortase; sequence GVTNNAYMPLLGIIGLVTSFSLLGLKAKKD.

It belongs to the antigen I/II family.

The protein localises to the secreted. The protein resides in the cell wall. Functionally, surface protein antigen implicated in dental caries. This chain is Major cell-surface adhesin PAc, found in Streptococcus mutans.